A 272-amino-acid polypeptide reads, in one-letter code: Acetylglutamate kinase (272 aa).

Residues 41–42 (GG), Arg63, and Asn166 contribute to the substrate site.

Belongs to the acetylglutamate kinase family. ArgB subfamily.

It localises to the cytoplasm. It carries out the reaction N-acetyl-L-glutamate + ATP = N-acetyl-L-glutamyl 5-phosphate + ADP. Its pathway is amino-acid biosynthesis; L-arginine biosynthesis; N(2)-acetyl-L-ornithine from L-glutamate: step 2/4. In terms of biological role, catalyzes the ATP-dependent phosphorylation of N-acetyl-L-glutamate. The protein is Acetylglutamate kinase of Anaeromyxobacter sp. (strain K).